A 518-amino-acid polypeptide reads, in one-letter code: Glutamate--cysteine ligase (518 aa).

This sequence belongs to the glutamate--cysteine ligase type 1 family. Type 1 subfamily.

The enzyme catalyses L-cysteine + L-glutamate + ATP = gamma-L-glutamyl-L-cysteine + ADP + phosphate + H(+). The protein operates within sulfur metabolism; glutathione biosynthesis; glutathione from L-cysteine and L-glutamate: step 1/2. The chain is Glutamate--cysteine ligase from Escherichia coli O8 (strain IAI1).